The primary structure comprises 103 residues: HSQGTFTSDYSKYLDSRRAQDFVQWLMNSKRSGGISXXHADGTFTSDMSSYLEEKAAKEFVDWLIKGRPKHADGSFTSDFNKALDIKAAQEFLDWIINTPVKE.

It belongs to the glucagon family.

Its subcellular location is the secreted. Its function is as follows. Plays a key role in glucose metabolism and homeostasis. Regulates blood glucose by increasing gluconeogenesis and decreasing glycolysis. This is Pro-glucagon (gcg) from Aquarana catesbeiana (American bullfrog).